We begin with the raw amino-acid sequence, 309 residues long: Gamma-hemolysin component A (309 aa).

An N-terminal signal peptide occupies residues 1–29 (MIKNKILTATLAVGLIAPLANPFIEISKA).

Belongs to the aerolysin family. In terms of assembly, toxicity requires sequential binding and synergistic association of a class S and a class F component which form heterooligomeric complexes. HlgA (class S) associates with HlgB (class F) thus forming an AB toxin in strains producing both gamma-hemolysins and leukocidins. HlgA and LukF-PV can also form a complex.

It localises to the secreted. Its function is as follows. Toxin that seems to act by forming pores in the membrane of the cell. Has a hemolytic and a leucotoxic activity. The polypeptide is Gamma-hemolysin component A (hlgA) (Staphylococcus aureus (strain MRSA252)).